Here is a 285-residue protein sequence, read N- to C-terminus: Sulfotransferase 2A1 (285 aa).

Residues lysine 44, serine 45, glycine 46, threonine 47, asparagine 48, and tryptophan 49 each coordinate 3'-phosphoadenylyl sulfate. Histidine 99 functions as the Proton acceptor in the catalytic mechanism. Residues arginine 121, serine 129, tyrosine 184, serine 218, methionine 223, arginine 247, lysine 248, and glycine 249 each coordinate 3'-phosphoadenylyl sulfate. Serine 251 carries the post-translational modification Phosphoserine.

This sequence belongs to the sulfotransferase 1 family. As to quaternary structure, homodimer. Post-translationally, the N-terminus is blocked. In terms of tissue distribution, liver, adrenal and at lower level in the kidney. Is present in human fetus in higher level in the adrenal than the liver and the kidney.

The protein resides in the cytoplasm. It catalyses the reaction an alcohol + 3'-phosphoadenylyl sulfate = an alkyl sulfate + adenosine 3',5'-bisphosphate + H(+). It carries out the reaction (24S)-hydroxycholesterol + 3'-phosphoadenylyl sulfate = (24S)-hydroxycholesterol 24-sulfate + adenosine 3',5'-bisphosphate + H(+). The enzyme catalyses (24S)-hydroxycholesterol + 3'-phosphoadenylyl sulfate = (24S)-hydroxycholesterol 3-sulfate + adenosine 3',5'-bisphosphate + H(+). The catalysed reaction is (24S)-hydroxycholesterol 24-sulfate + 3'-phosphoadenylyl sulfate = (24S)-hydroxycholesterol 3,24-disulfate + adenosine 3',5'-bisphosphate + H(+). It catalyses the reaction 3beta-hydroxyandrost-5-en-17-one + 3'-phosphoadenylyl sulfate = dehydroepiandrosterone 3-sulfate + adenosine 3',5'-bisphosphate + H(+). It carries out the reaction pregnenolone + 3'-phosphoadenylyl sulfate = pregnenolone sulfate + adenosine 3',5'-bisphosphate + H(+). The enzyme catalyses androsterone + 3'-phosphoadenylyl sulfate = androsterone 3alpha-sulfate + adenosine 3',5'-bisphosphate + H(+). The catalysed reaction is taurolithocholate + 3'-phosphoadenylyl sulfate = taurolithocholate 3-sulfate + adenosine 3',5'-bisphosphate + H(+). It catalyses the reaction lithocholate + 3'-phosphoadenylyl sulfate = lithocholate sulfate + adenosine 3',5'-bisphosphate + H(+). Subject to substrate inhibition. Alternate orientations for binding of steroid substrates to SULT2A1 may play a role in substrate inhibition. Sulfotransferase that utilizes 3'-phospho-5'-adenylyl sulfate (PAPS) as sulfonate donor to catalyze the sulfonation of steroids and bile acids in the liver and adrenal glands. Mediates the sulfation of a wide range of steroids and sterols, including pregnenolone, androsterone, DHEA, bile acids, cholesterol and as well many xenobiotics that contain alcohol and phenol functional groups. Sulfonation increases the water solubility of most compounds, and therefore their renal excretion, but it can also result in bioactivation to form active metabolites. Plays an important role in maintening steroid and lipid homeostasis. Plays a key role in bile acid metabolism. In addition, catalyzes the metabolic activation of potent carcinogenic polycyclic arylmethanols. The polypeptide is Sulfotransferase 2A1 (SULT2A1) (Homo sapiens (Human)).